A 360-amino-acid polypeptide reads, in one-letter code: MKNIFLHSLILENYRNFKNLELKIDNTPIILIGENGSGKTNILEAISLFYPGRGLRSAKLADICKTSEDHCSIKALLQSKLGLAEFTTQFKLSSNRRITEYNESKIANNELSKFTSMVWLTPQMEGIFTSGKVERRKFLDRIVYNFDPKHAELVGKYEYYMHERNKILAEEIQDDNWLKIIEEKMADISNHIAVNRLKTLEFMQQTINNLENEFPKADLSIDGIVEQKILDGEENIVSVITAELYKTRNKDKLIGRTSFGVHKSDFLVKHKKKNILAKLCSTGEQKAILIAIILAEMNYAIKLTKIAPVLLLDEVFVHLDDKRRDYLTEFFTYLNLQLWITTTNLESIENFASKAQLIKL.

Gly33–Thr40 provides a ligand contact to ATP.

This sequence belongs to the RecF family.

Its subcellular location is the cytoplasm. In terms of biological role, the RecF protein is involved in DNA metabolism; it is required for DNA replication and normal SOS inducibility. RecF binds preferentially to single-stranded, linear DNA. It also seems to bind ATP. This Rickettsia canadensis (strain McKiel) protein is DNA replication and repair protein RecF.